The primary structure comprises 87 residues: Small ribosomal subunit protein bS20 (87 aa).

It belongs to the bacterial ribosomal protein bS20 family.

Its function is as follows. Binds directly to 16S ribosomal RNA. The polypeptide is Small ribosomal subunit protein bS20 (Halothermothrix orenii (strain H 168 / OCM 544 / DSM 9562)).